The following is a 277-amino-acid chain: tRNA pseudouridine synthase B (277 aa).

Residue aspartate 38 is the Nucleophile of the active site.

It belongs to the pseudouridine synthase TruB family. Type 1 subfamily.

It carries out the reaction uridine(55) in tRNA = pseudouridine(55) in tRNA. In terms of biological role, responsible for synthesis of pseudouridine from uracil-55 in the psi GC loop of transfer RNAs. The protein is tRNA pseudouridine synthase B of Sulfurovum sp. (strain NBC37-1).